Reading from the N-terminus, the 287-residue chain is Serine/arginine-rich SC35-like splicing factor SCL33 (287 aa).

The segment at 1–34 is disordered; the sequence is MRGRSYTPSPPRGYGRRGRSPSPRGRYGGRSRDL. A phosphoserine mark is found at Ser-9 and Ser-20. Positions 36–114 constitute an RRM domain; sequence TSLLVRNLRH…RELTVVFAEE (79 aa). The span at 116–132 shows a compositional bias: basic and acidic residues; the sequence is RKKPTEMRARERGGGRF. The disordered stretch occupies residues 116-287; the sequence is RKKPTEMRAR…QYDEDRSPSQ (172 aa). Phosphoserine occurs at positions 165, 175, 177, 188, and 190. The segment covering 177–187 has biased composition (basic and acidic residues); it reads SPREERYDGRR. The span at 220 to 237 shows a compositional bias: basic residues; sequence SISRSPRRSRSPSPKRNR. Phosphoserine occurs at positions 238, 248, 271, 284, and 286. A compositionally biased stretch (basic residues) spans 244–260; sequence SISRSPRRSRSPRRSRR. The segment covering 278 to 287 has biased composition (basic and acidic residues); sequence QYDEDRSPSQ.

It belongs to the splicing factor SR family. SCL subfamily. As to quaternary structure, component of the spliceosome. Homodimer. Interacts with AFC2, CYP59, RS2Z33, RNU1 and SR45. The interaction with AFC2 depends on phosphorylation status. Post-translationally, phosphorylated by AFC2. Ubiquitous. Mostly expressed in roots, fruits and flowers, and, to a lower extent, in leaves.

The protein resides in the nucleus speckle. The protein localises to the nucleus. Its subcellular location is the nucleoplasm. It localises to the cytoplasm. Involved in intron recognition and spliceosome assembly. Binds to multiple 5'-GAAG-3' repeats found in its third intron, suggesting autoregulation of alternative splicing. May be necessary for accurate splicing of the 3' region of introns. In Arabidopsis thaliana (Mouse-ear cress), this protein is Serine/arginine-rich SC35-like splicing factor SCL33 (SCL33).